The sequence spans 658 residues: Probable methyl-accepting chemotaxis protein BT9727_0469 (658 aa).

Residues 1–14 (MLQGKLRRSSLKAK) are Cytoplasmic-facing. Residues 15-35 (LLVSFVIVLILPSIVIGWTSY) traverse the membrane as a helical segment. Topologically, residues 36 to 283 (QQAKTNFNET…ANPIFYKTLT (248 aa)) are extracellular. Positions 44 to 109 (ETILQSAEDN…NKLHPEIEAI (66 aa)) form a coiled coil. Residues 150-221 (ITAPYKSSTT…AHPTMKPGDK (72 aa)) enclose the Cache domain. The helical transmembrane segment at 284–304 (VIGISLIIGGVLIYFIIASII) threads the bilayer. Positions 301–353 (ASIISPLKQLVISSKKISEGDLTETITVHSKDEIGQLGESFNEMAASLHHVIS) constitute an HAMP domain. Topologically, residues 305 to 658 (SPLKQLVISS…LQEMIGKFKV (354 aa)) are cytoplasmic. E368 carries the glutamate methyl ester (Glu) modification. The Methyl-accepting transducer domain occupies 372–622 (SMKQTSEATE…ENAASVQNIA (251 aa)). Q592 bears the Deamidated glutamine mark. Q592 carries the glutamate methyl ester (Gln) modification. Residues E627 and E634 each carry the glutamate methyl ester (Glu) modification.

Belongs to the methyl-accepting chemotaxis (MCP) protein family.

It is found in the cell membrane. Chemotactic-signal transducers respond to changes in the concentration of attractants and repellents in the environment, transduce a signal from the outside to the inside of the cell, and facilitate sensory adaptation through the variation of the level of methylation. This Bacillus thuringiensis subsp. konkukian (strain 97-27) protein is Probable methyl-accepting chemotaxis protein BT9727_0469.